Consider the following 566-residue polypeptide: Putative sensory transducer protein YvaQ (566 aa).

An N-terminal signal peptide occupies residues 1–31 (MRLTISRKFSLVFLTLILINLLVGGIGVLNM). Residues 74 to 110 (DKSKMDTLDQEMNQIMEDINQKLDNYEKTISTDKEQK) adopt a coiled-coil conformation. A helical membrane pass occupies residues 186–206 (IYTALLVAASILISIFIWLYI). The HAMP domain maps to 208–261 (RNIVKPIIRMKESANHIAEGDLSNDMEALNSKDELGDLNEALQKMVGNLRDIVG). The region spanning 280-530 (ATNETRSGSK…ESAAGIEETF (251 aa)) is the Methyl-accepting transducer domain. Residues 536-566 (SAHSMDQVLLNAEELEQLANELNEKMGQFTI) adopt a coiled-coil conformation.

Belongs to the methyl-accepting chemotaxis (MCP) protein family.

Its subcellular location is the cell membrane. Chemotactic-signal transducers respond to changes in the concentration of attractants and repellents in the environment, transduce a signal from the outside to the inside of the cell, and facilitate sensory adaptation through the variation of the level of methylation. Attractants increase the level of methylation while repellents decrease the level of methylation. In Bacillus subtilis (strain 168), this protein is Putative sensory transducer protein YvaQ (yvaQ).